The sequence spans 278 residues: Large ribosomal subunit protein uL2 (278 aa).

Positions 222-278 are disordered; sequence GVVMNPIDHPHGGGEGRTSGGRHPVTPWGKPTKGKKTRSNKSTDKFILISRHKRKKK.

Belongs to the universal ribosomal protein uL2 family. Part of the 50S ribosomal subunit. Forms a bridge to the 30S subunit in the 70S ribosome.

Its function is as follows. One of the primary rRNA binding proteins. Required for association of the 30S and 50S subunits to form the 70S ribosome, for tRNA binding and peptide bond formation. It has been suggested to have peptidyltransferase activity; this is somewhat controversial. Makes several contacts with the 16S rRNA in the 70S ribosome. The polypeptide is Large ribosomal subunit protein uL2 (Rhodopseudomonas palustris (strain ATCC BAA-98 / CGA009)).